The following is a 361-amino-acid chain: Chorismate synthase (361 aa).

NADP(+) contacts are provided by Arg48 and Arg54. FMN-binding positions include 125–127 (RSS), 238–239 (NA), Gly278, 293–297 (KPTSS), and Arg319.

Belongs to the chorismate synthase family. In terms of assembly, homotetramer. The cofactor is FMNH2.

It carries out the reaction 5-O-(1-carboxyvinyl)-3-phosphoshikimate = chorismate + phosphate. The protein operates within metabolic intermediate biosynthesis; chorismate biosynthesis; chorismate from D-erythrose 4-phosphate and phosphoenolpyruvate: step 7/7. Its function is as follows. Catalyzes the anti-1,4-elimination of the C-3 phosphate and the C-6 proR hydrogen from 5-enolpyruvylshikimate-3-phosphate (EPSP) to yield chorismate, which is the branch point compound that serves as the starting substrate for the three terminal pathways of aromatic amino acid biosynthesis. This reaction introduces a second double bond into the aromatic ring system. This Sodalis glossinidius (strain morsitans) protein is Chorismate synthase.